Reading from the N-terminus, the 21-residue chain is Hemocyanin subunit 4 (21 aa).

It belongs to the tyrosinase family. Hemocyanin subfamily. In terms of tissue distribution, hemolymph.

Its subcellular location is the secreted. The protein resides in the extracellular space. Its function is as follows. Hemocyanins are copper-containing oxygen carriers occurring freely dissolved in the hemolymph of many mollusks and arthropods. The polypeptide is Hemocyanin subunit 4 (Maja squinado (Mediterranean spider crab)).